The chain runs to 197 residues: Large ribosomal subunit protein bL9c (197 aa).

A chloroplast-targeting transit peptide spans 1 to 42 (MASSTALSLSWSSSPCWSHSFNGGANETLKVSERRFNFEVVS).

The protein belongs to the bacterial ribosomal protein bL9 family. In terms of assembly, part of the 50S ribosomal subunit.

The protein localises to the plastid. It is found in the chloroplast. In terms of biological role, binds to the 23S rRNA. This is Large ribosomal subunit protein bL9c (RPL9) from Arabidopsis thaliana (Mouse-ear cress).